Reading from the N-terminus, the 229-residue chain is Large ribosomal subunit protein uL1 (229 aa).

This sequence belongs to the universal ribosomal protein uL1 family. Part of the 50S ribosomal subunit.

Its function is as follows. Binds directly to 23S rRNA. The L1 stalk is quite mobile in the ribosome, and is involved in E site tRNA release. In terms of biological role, protein L1 is also a translational repressor protein, it controls the translation of the L11 operon by binding to its mRNA. The polypeptide is Large ribosomal subunit protein uL1 (Haemophilus ducreyi (strain 35000HP / ATCC 700724)).